Consider the following 143-residue polypeptide: 3-dehydroquinate dehydratase (143 aa).

Tyr-22 serves as the catalytic Proton acceptor. Asn-73, His-79, and Asp-86 together coordinate substrate. His-99 (proton donor) is an active-site residue. Substrate is bound by residues 100 to 101 (IS) and Arg-110.

It belongs to the type-II 3-dehydroquinase family. In terms of assembly, homododecamer.

The catalysed reaction is 3-dehydroquinate = 3-dehydroshikimate + H2O. It participates in metabolic intermediate biosynthesis; chorismate biosynthesis; chorismate from D-erythrose 4-phosphate and phosphoenolpyruvate: step 3/7. Catalyzes a trans-dehydration via an enolate intermediate. This Mycobacterium avium (strain 104) protein is 3-dehydroquinate dehydratase.